The sequence spans 219 residues: 3-dehydroquinate dehydratase (219 aa).

Residues 34–36 (ELR) and R63 contribute to the 3-dehydroquinate site. The Proton donor/acceptor role is filled by H114. The Schiff-base intermediate with substrate role is filled by K139. 3-dehydroquinate contacts are provided by R174, T193, and Q197.

The protein belongs to the type-I 3-dehydroquinase family. In terms of assembly, homodimer.

It carries out the reaction 3-dehydroquinate = 3-dehydroshikimate + H2O. The protein operates within metabolic intermediate biosynthesis; chorismate biosynthesis; chorismate from D-erythrose 4-phosphate and phosphoenolpyruvate: step 3/7. Its function is as follows. Involved in the third step of the chorismate pathway, which leads to the biosynthesis of aromatic amino acids. Catalyzes the cis-dehydration of 3-dehydroquinate (DHQ) and introduces the first double bond of the aromatic ring to yield 3-dehydroshikimate. This Sulfolobus acidocaldarius (strain ATCC 33909 / DSM 639 / JCM 8929 / NBRC 15157 / NCIMB 11770) protein is 3-dehydroquinate dehydratase.